We begin with the raw amino-acid sequence, 442 residues long: Ribosomal protein uS12 methylthiotransferase RimO (442 aa).

The MTTase N-terminal domain maps to 5–117 (PSIGVVSLGC…VLDAIHAALP (113 aa)). Residues Cys14, Cys50, Cys79, Cys148, Cys152, and Cys155 each contribute to the [4Fe-4S] cluster site. Residues 134-371 (LTPPHYAYLK…MAVQEAISRQ (238 aa)) form the Radical SAM core domain. The region spanning 374-441 (QRRVGQRQRV…AHDLYGMVVS (68 aa)) is the TRAM domain.

The protein belongs to the methylthiotransferase family. RimO subfamily. The cofactor is [4Fe-4S] cluster.

The protein localises to the cytoplasm. The enzyme catalyses L-aspartate(89)-[ribosomal protein uS12]-hydrogen + (sulfur carrier)-SH + AH2 + 2 S-adenosyl-L-methionine = 3-methylsulfanyl-L-aspartate(89)-[ribosomal protein uS12]-hydrogen + (sulfur carrier)-H + 5'-deoxyadenosine + L-methionine + A + S-adenosyl-L-homocysteine + 2 H(+). In terms of biological role, catalyzes the methylthiolation of an aspartic acid residue of ribosomal protein uS12. The chain is Ribosomal protein uS12 methylthiotransferase RimO from Acidithiobacillus ferrooxidans (strain ATCC 53993 / BNL-5-31) (Leptospirillum ferrooxidans (ATCC 53993)).